The sequence spans 333 residues: GTPase Obg (333 aa).

The Obg domain maps to 1–159 (MKFIDQTIIQ…RDIQLELILI (159 aa)). In terms of domain architecture, OBG-type G spans 160 to 332 (ADVGTLGMPN…LCSDIAFYLQ (173 aa)). Residues 166–173 (GMPNAGKS), 191–195 (FTTLN), 212–215 (DIPG), 282–285 (NKID), and 313–315 (SSI) contribute to the GTP site. Positions 173 and 193 each coordinate Mg(2+).

This sequence belongs to the TRAFAC class OBG-HflX-like GTPase superfamily. OBG GTPase family. Monomer. Mg(2+) is required as a cofactor.

It is found in the cytoplasm. In terms of biological role, an essential GTPase which binds GTP, GDP and possibly (p)ppGpp with moderate affinity, with high nucleotide exchange rates and a fairly low GTP hydrolysis rate. Plays a role in control of the cell cycle, stress response, ribosome biogenesis and in those bacteria that undergo differentiation, in morphogenesis control. The chain is GTPase Obg from Buchnera aphidicola subsp. Schizaphis graminum (strain Sg).